Reading from the N-terminus, the 432-residue chain is Heme-based aerotactic transducer HemAT (432 aa).

The Methyl-accepting transducer domain occupies 184–420 (YNQTRDEQEE…EVSRAVSHVA (237 aa)).

It belongs to the methyl-accepting chemotaxis (MCP) protein family. In terms of assembly, homotetramer.

In terms of biological role, heme-containing signal transducer responsible for aerotaxis, the migratory response toward or away from oxygen. This Bacillus subtilis (strain 168) protein is Heme-based aerotactic transducer HemAT (hemAT).